Here is a 256-residue protein sequence, read N- to C-terminus: Pimeloyl-[acyl-carrier protein] methyl ester esterase (256 aa).

The AB hydrolase-1 domain occupies 16–240 (LVILHGWGVN…PKASHAPFLS (225 aa)). Substrate contacts are provided by residues Trp-22, 80–81 (SL), and 143–147 (FLAIQ). The active-site Nucleophile is the Ser-80. Residues Asp-207 and His-235 contribute to the active site. His-235 is a substrate binding site.

It belongs to the AB hydrolase superfamily. Carboxylesterase BioH family. In terms of assembly, monomer.

It is found in the cytoplasm. It carries out the reaction 6-carboxyhexanoyl-[ACP] methyl ester + H2O = 6-carboxyhexanoyl-[ACP] + methanol + H(+). It participates in cofactor biosynthesis; biotin biosynthesis. Its function is as follows. The physiological role of BioH is to remove the methyl group introduced by BioC when the pimeloyl moiety is complete. It allows to synthesize pimeloyl-ACP via the fatty acid synthetic pathway through the hydrolysis of the ester bonds of pimeloyl-ACP esters. This Shewanella woodyi (strain ATCC 51908 / MS32) protein is Pimeloyl-[acyl-carrier protein] methyl ester esterase.